We begin with the raw amino-acid sequence, 556 residues long: Formate--tetrahydrofolate ligase 1 (556 aa).

65-72 is an ATP binding site; it reads TPAGEGKS.

This sequence belongs to the formate--tetrahydrofolate ligase family.

It carries out the reaction (6S)-5,6,7,8-tetrahydrofolate + formate + ATP = (6R)-10-formyltetrahydrofolate + ADP + phosphate. Its pathway is one-carbon metabolism; tetrahydrofolate interconversion. This is Formate--tetrahydrofolate ligase 1 from Streptococcus pyogenes serotype M28 (strain MGAS6180).